A 448-amino-acid polypeptide reads, in one-letter code: Probable glycine dehydrogenase (decarboxylating) subunit 1 (448 aa).

This sequence belongs to the GcvP family. N-terminal subunit subfamily. As to quaternary structure, the glycine cleavage system is composed of four proteins: P, T, L and H. In this organism, the P 'protein' is a heterodimer of two subunits.

The catalysed reaction is N(6)-[(R)-lipoyl]-L-lysyl-[glycine-cleavage complex H protein] + glycine + H(+) = N(6)-[(R)-S(8)-aminomethyldihydrolipoyl]-L-lysyl-[glycine-cleavage complex H protein] + CO2. Its function is as follows. The glycine cleavage system catalyzes the degradation of glycine. The P protein binds the alpha-amino group of glycine through its pyridoxal phosphate cofactor; CO(2) is released and the remaining methylamine moiety is then transferred to the lipoamide cofactor of the H protein. The sequence is that of Probable glycine dehydrogenase (decarboxylating) subunit 1 from Caulobacter vibrioides (strain ATCC 19089 / CIP 103742 / CB 15) (Caulobacter crescentus).